The chain runs to 261 residues: UPF0177 protein YvdC (261 aa).

Transmembrane regions (helical) follow at residues 15–35 (WVIVIILALLFSALSVSIFHL), 43–63 (VLSIVGLIFAYHKSVWLVLFI), 84–104 (LDTVIFFIIFLLTIISSYLIA), 123–143 (IIIGFALLFLVSILTGIFAQI), 197–217 (YFAFLTALLLFAYMHGPTDLY), and 239–259 (FYLNMSVHLLWNLFGLVIALV).

It belongs to the UPF0177 family.

It is found in the cell membrane. The chain is UPF0177 protein YvdC (yvdC) from Lactococcus lactis subsp. lactis (strain IL1403) (Streptococcus lactis).